The chain runs to 116 residues: Protein Wnt-5(III) (116 aa).

S1 carries O-palmitoleoyl serine; by PORCN lipidation. N-linked (GlcNAc...) asparagine glycosylation occurs at N69. A disulfide bridge links C82 with C97.

Belongs to the Wnt family. Palmitoleoylation is required for efficient binding to frizzled receptors. Depalmitoleoylation leads to Wnt signaling pathway inhibition.

Its subcellular location is the secreted. It is found in the extracellular space. The protein resides in the extracellular matrix. Functionally, ligand for members of the frizzled family of seven transmembrane receptors. Probable developmental protein. May be a signaling molecule which affects the development of discrete regions of tissues. Is likely to signal over only few cell diameters. The sequence is that of Protein Wnt-5(III) (WNT-5(III)) from Eptatretus stoutii (Pacific hagfish).